The chain runs to 609 residues: Myoneurin (609 aa).

The BTB domain maps to 24 to 89 (CDCTILIGDF…IYSGNLNYDS (66 aa)). 2 short sequence motifs (nuclear localization signal) span residues 172 to 188 (KKSQKIKRWKRPLRSHQ) and 257 to 262 (QKPAKL). C2H2-type zinc fingers lie at residues 301 to 323 (PVCNTCGKVFSEASSLRRHMRIH), 329 to 351 (YVCHLCAKAFTQCNQLKTHVRTH), 357 to 380 (YQCKKCDKGFAQKCQLVFHSRMHH), 386 to 408 (YKCDVCNLQFATSSNLKIHARKH), 414 to 436 (YVCDRCGQRFAQASTLTYHVRRH), 442 to 464 (YVCDTCGKAFAVSSSLITHARKH), 470 to 492 (YICGVCRKSFISSGELNKHFRSH), and 498 to 521 (FVCEVCGNSYTDVKNLKKHKLKMH). Residues 528–553 (IEMKSAENSSSSEDSTTKSPEPESLE) form a disordered region. Positions 533-546 (AENSSSSEDSTTKS) are enriched in low complexity.

It is found in the nucleus. This Xenopus laevis (African clawed frog) protein is Myoneurin (mynn).